The sequence spans 37 residues: MKVQPSVKKICEKCKVIRRNGRVMVICENLRHKQRQG.

Belongs to the bacterial ribosomal protein bL36 family.

The protein is Large ribosomal subunit protein bL36 of Rhodococcus erythropolis (strain PR4 / NBRC 100887).